The following is a 129-amino-acid chain: Small ribosomal subunit protein uS11 (129 aa).

The protein belongs to the universal ribosomal protein uS11 family. As to quaternary structure, part of the 30S ribosomal subunit. Interacts with proteins S7 and S18. Binds to IF-3.

In terms of biological role, located on the platform of the 30S subunit, it bridges several disparate RNA helices of the 16S rRNA. Forms part of the Shine-Dalgarno cleft in the 70S ribosome. This Methylobacterium radiotolerans (strain ATCC 27329 / DSM 1819 / JCM 2831 / NBRC 15690 / NCIMB 10815 / 0-1) protein is Small ribosomal subunit protein uS11.